Consider the following 315-residue polypeptide: Putative HTH-type transcriptional regulatory protein PF1851 (315 aa).

Positions 131–189 (LRELREKYGYSTTELAEMLGVSRKSVQRYEKGEGMVSIDVAIRLEEIFDEPLVKPIDIF) constitute an HTH cro/C1-type domain. Positions 142–161 (TTELAEMLGVSRKSVQRYEK) form a DNA-binding region, H-T-H motif.

This is Putative HTH-type transcriptional regulatory protein PF1851 from Pyrococcus furiosus (strain ATCC 43587 / DSM 3638 / JCM 8422 / Vc1).